We begin with the raw amino-acid sequence, 243 residues long: Collagen triple helix repeat-containing protein 1 (243 aa).

The signal sequence occupies residues 1-30 (MRPQGPAASPQRLRGLLLLLLLQLPAPSSA). The 34-residue stretch at 57-90 (QGPAGVPGRDGSPGANGIPGTPGIPGRDGFKGEK) folds into the Collagen-like domain. The segment at 62–85 (VPGRDGSPGANGIPGTPGIPGRDG) is disordered. Asn186 carries an N-linked (GlcNAc...) asparagine glycan.

Post-translationally, N-glycosylated. Isoform 1 is expressed in calcified atherosclerotic plaque and chondrocyte-like cells.

The protein localises to the secreted. It is found in the extracellular space. Its subcellular location is the extracellular matrix. Its function is as follows. May act as a negative regulator of collagen matrix deposition. In Homo sapiens (Human), this protein is Collagen triple helix repeat-containing protein 1 (CTHRC1).